Here is a 101-residue protein sequence, read N- to C-terminus: UPF0751 protein DSY3086 (101 aa).

This sequence belongs to the UPF0751 family.

In Desulfitobacterium hafniense (strain Y51), this protein is UPF0751 protein DSY3086.